Consider the following 326-residue polypeptide: tRNA dimethylallyltransferase (326 aa).

ATP is bound at residue 18–25 (GPTASGKS). Position 20–25 (20–25 (TASGKS)) interacts with substrate. Interaction with substrate tRNA stretches follow at residues 43–46 (DSMQ) and 167–171 (QRIAR).

This sequence belongs to the IPP transferase family. In terms of assembly, monomer. The cofactor is Mg(2+).

It catalyses the reaction adenosine(37) in tRNA + dimethylallyl diphosphate = N(6)-dimethylallyladenosine(37) in tRNA + diphosphate. In terms of biological role, catalyzes the transfer of a dimethylallyl group onto the adenine at position 37 in tRNAs that read codons beginning with uridine, leading to the formation of N6-(dimethylallyl)adenosine (i(6)A). This chain is tRNA dimethylallyltransferase, found in Rhodospirillum rubrum (strain ATCC 11170 / ATH 1.1.1 / DSM 467 / LMG 4362 / NCIMB 8255 / S1).